Reading from the N-terminus, the 251-residue chain is Flap endonuclease Xni (251 aa).

Position 104 (Asp104) interacts with Mg(2+). The 5'-3' exonuclease domain maps to 160-250 (VQPQQLPDYW…DGNLQQLRLK (91 aa)). K(+)-binding residues include Leu171, Ala172, Pro180, Val182, and Ile185. The tract at residues 184–189 (GIGPKS) is interaction with DNA.

Belongs to the Xni family. Mg(2+) is required as a cofactor. K(+) serves as cofactor.

In terms of biological role, has flap endonuclease activity. During DNA replication, flap endonucleases cleave the 5'-overhanging flap structure that is generated by displacement synthesis when DNA polymerase encounters the 5'-end of a downstream Okazaki fragment. The protein is Flap endonuclease Xni of Escherichia fergusonii (strain ATCC 35469 / DSM 13698 / CCUG 18766 / IAM 14443 / JCM 21226 / LMG 7866 / NBRC 102419 / NCTC 12128 / CDC 0568-73).